We begin with the raw amino-acid sequence, 237 residues long: ATP synthase subunit a (237 aa).

The next 5 helical transmembrane spans lie at 17–37 (LSDM…AVAA), 75–95 (FLTL…LGLP), 112–132 (DATV…YYGV), 179–201 (ILLG…GAAI), and 214–234 (GTIQ…HKVS).

It belongs to the ATPase A chain family. F-type ATPases have 2 components, CF(1) - the catalytic core - and CF(0) - the membrane proton channel. CF(1) has five subunits: alpha(3), beta(3), gamma(1), delta(1), epsilon(1). CF(0) has three main subunits: a(1), b(2) and c(9-12). The alpha and beta chains form an alternating ring which encloses part of the gamma chain. CF(1) is attached to CF(0) by a central stalk formed by the gamma and epsilon chains, while a peripheral stalk is formed by the delta and b chains.

The protein localises to the cell membrane. Functionally, key component of the proton channel; it plays a direct role in the translocation of protons across the membrane. This Geobacillus kaustophilus (strain HTA426) protein is ATP synthase subunit a.